Reading from the N-terminus, the 1154-residue chain is Coiled-coil domain-containing protein 136 (1154 aa).

A disordered region spans residues 1 to 48 (MQAMEGEVLLPALYEEEEEEEEEEEEVEEEEEQVQKGGSVGSLSVNKH). The span at 14 to 32 (YEEEEEEEEEEEEVEEEEE) shows a compositional bias: acidic residues. Phosphoserine is present on S52. 2 coiled-coil regions span residues 696–733 (QAKQELLQQEQGRLLEERKRLQADLQLCLEEMQLLQVQ) and 859–974 (KLQA…RPSV). Residues 1031 to 1058 (DGLAKEEEKKEEMEEEKKQVKEEAKEQC) are compositionally biased toward basic and acidic residues. Residues 1031–1131 (DGLAKEEEKK…SSPTPNPPIF (101 aa)) are disordered. The span at 1077–1109 (DQEENEEDKEEEEKEEDSEEEEDDADSSLESPE) shows a compositional bias: acidic residues. A helical transmembrane segment spans residues 1130–1150 (IFSLPLVGLVVISALLWCWWA).

As to expression, expressed in gastric tissues. Down-regulated in gastric cancer.

The protein localises to the cytoplasmic vesicle. It localises to the secretory vesicle. The protein resides in the acrosome membrane. Functionally, may play a role in acrosome formation in spermatogenesis and in fertilization. This is Coiled-coil domain-containing protein 136 (CCDC136) from Homo sapiens (Human).